The following is a 428-amino-acid chain: Gamma-glutamyl phosphate reductase (428 aa).

This sequence belongs to the gamma-glutamyl phosphate reductase family.

The protein localises to the cytoplasm. It carries out the reaction L-glutamate 5-semialdehyde + phosphate + NADP(+) = L-glutamyl 5-phosphate + NADPH + H(+). The protein operates within amino-acid biosynthesis; L-proline biosynthesis; L-glutamate 5-semialdehyde from L-glutamate: step 2/2. Catalyzes the NADPH-dependent reduction of L-glutamate 5-phosphate into L-glutamate 5-semialdehyde and phosphate. The product spontaneously undergoes cyclization to form 1-pyrroline-5-carboxylate. In Chromohalobacter salexigens (strain ATCC BAA-138 / DSM 3043 / CIP 106854 / NCIMB 13768 / 1H11), this protein is Gamma-glutamyl phosphate reductase.